Reading from the N-terminus, the 781-residue chain is Probable serine/threonine-protein kinase C70.05c (781 aa).

Disordered stretches follow at residues 1 to 315 (MPSD…PLVS) and 368 to 417 (YSGK…TNIS). Positions 21–31 (ESPSSRSIGSG) are enriched in low complexity. Positions 43 to 63 (FKNSFLSRKNSSQIKSPSDYK) are enriched in polar residues. Residues 64-73 (SSAHEQRVNH) are compositionally biased toward basic and acidic residues. Residues 74–92 (TTDSMAHVPGNNSPLQTPQ) show a composition bias toward polar residues. Ser94 bears the Phosphoserine mark. The segment covering 112–121 (SRHHKPHHSG) has biased composition (basic residues). Polar residues-rich tracts occupy residues 136–146 (SNANSPTSESP), 161–195 (KNTS…PNSR), and 206–228 (NSAS…SLSR). The residue at position 253 (Ser253) is a Phosphoserine. The segment covering 272–304 (PLTASPTPSSPTGTPNSMSKSPSLSSLASTGAS) has biased composition (low complexity). Residues 379–406 (NVGSSANTAPNSPTSANSSEGNQGNGPT) are compositionally biased toward polar residues. The Protein kinase domain occupies 432 to 742 (AKRVVPRLSA…AQEALNLPFV (311 aa)). ATP-binding positions include 452–460 (MGSGATAVI) and Lys480. Asp584 (proton acceptor) is an active-site residue.

The protein belongs to the protein kinase superfamily. Ser/Thr protein kinase family.

Its subcellular location is the cytoplasm. The enzyme catalyses L-seryl-[protein] + ATP = O-phospho-L-seryl-[protein] + ADP + H(+). It carries out the reaction L-threonyl-[protein] + ATP = O-phospho-L-threonyl-[protein] + ADP + H(+). The polypeptide is Probable serine/threonine-protein kinase C70.05c (Schizosaccharomyces pombe (strain 972 / ATCC 24843) (Fission yeast)).